A 463-amino-acid polypeptide reads, in one-letter code: Chaperone SurA (463 aa).

Positions 1–25 (MTKPFSVLLASLLVITSTVSPLASA) are cleaved as a signal peptide. PpiC domains are found at residues 174–276 (GSQY…KLVE) and 289–388 (LTEY…QRVG). Disordered stretches follow at residues 329 to 348 (ATAK…GDLG) and 434 to 463 (GDRA…QPTR). A compositionally biased stretch (low complexity) spans 440–452 (DATAAPEPAAAPA). Residues 453 to 463 (APTPPPAQPTR) show a composition bias toward pro residues.

Its subcellular location is the periplasm. The enzyme catalyses [protein]-peptidylproline (omega=180) = [protein]-peptidylproline (omega=0). In terms of biological role, chaperone involved in the correct folding and assembly of outer membrane proteins. Recognizes specific patterns of aromatic residues and the orientation of their side chains, which are found more frequently in integral outer membrane proteins. May act in both early periplasmic and late outer membrane-associated steps of protein maturation. The polypeptide is Chaperone SurA (Xanthomonas campestris pv. campestris (strain 8004)).